The following is a 665-amino-acid chain: GRB2-associated-binding protein 2 (665 aa).

Phosphoserine is present on Ser-2. Residues 8–119 form the PH domain; that stretch reads DVVCTGWLRK…WVQSICQICG (112 aa). A disordered region spans residues 131-183; sequence RNLSSASHGPRSSPAEFSSSQHLLRERKSSAPSHSSQPTLFTFEPPMTSHMQP. Ser-135, Ser-142, Ser-143, Ser-149, Ser-150, Ser-160, Ser-165, Ser-211, Ser-220, and Ser-261 each carry phosphoserine. A compositionally biased stretch (polar residues) spans 160-170; the sequence is SAPSHSSQPTL. Thr-262 carries the post-translational modification Phosphothreonine. Tyr-263 bears the Phosphotyrosine mark. At Thr-275 the chain carries Phosphothreonine. Ser-278 and Ser-282 each carry phosphoserine. Phosphothreonine is present on Thr-284. Tyr-290 carries the phosphotyrosine modification. Residue Thr-328 is modified to Phosphothreonine. Disordered stretches follow at residues 340–442 and 491–517; these read TSGD…ENYV and PSRGSEIQPPPVNRNLKPDRKAKPTPL. An SH3-binding motif is present at residues 348 to 355; that stretch reads PPPRPPKP. Position 365 is a phosphoserine (Ser-365). Phosphothreonine is present on residues Thr-382 and Thr-388. Residue Ser-402 is modified to Phosphoserine. Position 405 is a phosphothreonine (Thr-405). Residues 412-423 show a composition bias toward low complexity; it reads GSGESASWSAES. Ser-420 and Ser-423 each carry phosphoserine. Tyr-441 is subject to Phosphotyrosine. The SH3-binding motif lies at 499–508; it reads PPPVNRNLKP. At Ser-532 the chain carries Phosphoserine. Composition is skewed to polar residues over residues 548–566 and 578–600; these read SSSQYCRPISTQSITSTDS and NPVSASPVPSGTNSPAPRKSTGS. Residues 548-631 are disordered; it reads SSSQYCRPIS…SSVTSDEKVD (84 aa). Ser-612 is subject to Phosphoserine. At Tyr-632 the chain carries Phosphotyrosine. The span at 646 to 659 shows a compositional bias: polar residues; the sequence is TMQEWTDVRQSSEP. Residues 646–665 are disordered; sequence TMQEWTDVRQSSEPSKGAKL.

This sequence belongs to the GAB family. As to quaternary structure, part of a complex composed of EEIG1, TNFRSF11A/RANK, PLCG2, GAB2, TEC and BTK; complex formation increases in the presence of TNFSF11/RANKL. Interacts with HCK. Interacts with SHC1; may mediate interaction with receptors. Interacts with SYK. Interacts with PI-3 kinase. Interacts with GRB2 (via SH3 2 domain). Interacts (phosphorylated) with PTPN11. Interacts with TNFRSF11A (via cytoplasmic domain). Interacts (phosphorylated) with 14-3-3 family proteins SFN, YWHAB, YWHAE, YWHAG, YWHAH, YWHAQ and YWHAZ; prevents interaction with GRB2 and attenuates GAB2 signaling. Phosphorylated upon EGF stimulation. Phosphorylated on tyrosine residues by HCK upon IL6 signaling. Phosphorylated on tyrosine residue(s) by the thrombopoietin receptor (TPOR), stem cell factor receptor (SCFR), and T-cell and B-cell antigen receptors, gp130, IL-2R and IL-3R. Phosphorylated upon stimulation of TNFRSF11A/RANK by TNFSF11/RANKL. Post-translationally, dephosphorylated by PTPN11.

It is found in the cytoplasm. Its subcellular location is the cell membrane. The protein localises to the membrane raft. In terms of biological role, adapter protein which acts downstream of several membrane receptors including cytokine, antigen, hormone, cell matrix and growth factor receptors to regulate multiple signaling pathways. Regulates osteoclast differentiation mediating the TNFRSF11A/RANK signaling. In allergic response, it plays a role in mast cells activation and degranulation through PI-3-kinase regulation. Also involved in the regulation of cell proliferation and hematopoiesis. The sequence is that of GRB2-associated-binding protein 2 (Gab2) from Rattus norvegicus (Rat).